The sequence spans 304 residues: Undecaprenyl-diphosphatase (304 aa).

8 helical membrane passes run 5–25 (FLFI…EFVP), 47–67 (GFPE…VVVL), 72–92 (ISSS…LKTS), 111–131 (FGIN…LFHD), 137–157 (LFST…LIVI), 209–231 (ISGL…AMVG), 248–268 (TNWI…LVVI), and 283–303 (FAIY…TKVI).

It belongs to the UppP family.

It localises to the cell membrane. The enzyme catalyses di-trans,octa-cis-undecaprenyl diphosphate + H2O = di-trans,octa-cis-undecaprenyl phosphate + phosphate + H(+). Functionally, catalyzes the dephosphorylation of undecaprenyl diphosphate (UPP). Confers resistance to bacitracin. The sequence is that of Undecaprenyl-diphosphatase from Clostridium perfringens (strain ATCC 13124 / DSM 756 / JCM 1290 / NCIMB 6125 / NCTC 8237 / Type A).